Reading from the N-terminus, the 211-residue chain is Large ribosomal subunit protein bL25 (211 aa).

The interval 188–211 is disordered; the sequence is HREEEKAPEETGEAAPAPTPETGQ. Low complexity predominate over residues 200–211; the sequence is EAAPAPTPETGQ.

This sequence belongs to the bacterial ribosomal protein bL25 family. CTC subfamily. Part of the 50S ribosomal subunit; part of the 5S rRNA/L5/L18/L25 subcomplex. Contacts the 5S rRNA. Binds to the 5S rRNA independently of L5 and L18.

This is one of the proteins that binds to the 5S RNA in the ribosome where it forms part of the central protuberance. This is Large ribosomal subunit protein bL25 from Desulforudis audaxviator (strain MP104C).